The primary structure comprises 205 residues: Imidazole glycerol phosphate synthase subunit HisH (205 aa).

Positions 1–205 (MITIVDYQMG…RFATAPVEVA (205 aa)) constitute a Glutamine amidotransferase type-1 domain. Cysteine 79 functions as the Nucleophile in the catalytic mechanism. Active-site residues include histidine 182 and glutamate 184.

Heterodimer of HisH and HisF.

The protein resides in the cytoplasm. The catalysed reaction is 5-[(5-phospho-1-deoxy-D-ribulos-1-ylimino)methylamino]-1-(5-phospho-beta-D-ribosyl)imidazole-4-carboxamide + L-glutamine = D-erythro-1-(imidazol-4-yl)glycerol 3-phosphate + 5-amino-1-(5-phospho-beta-D-ribosyl)imidazole-4-carboxamide + L-glutamate + H(+). It carries out the reaction L-glutamine + H2O = L-glutamate + NH4(+). It participates in amino-acid biosynthesis; L-histidine biosynthesis; L-histidine from 5-phospho-alpha-D-ribose 1-diphosphate: step 5/9. Its function is as follows. IGPS catalyzes the conversion of PRFAR and glutamine to IGP, AICAR and glutamate. The HisH subunit catalyzes the hydrolysis of glutamine to glutamate and ammonia as part of the synthesis of IGP and AICAR. The resulting ammonia molecule is channeled to the active site of HisF. This is Imidazole glycerol phosphate synthase subunit HisH from Rhodopirellula baltica (strain DSM 10527 / NCIMB 13988 / SH1).